The sequence spans 369 residues: DNA polymerase processivity factor (369 aa).

The disordered stretch occupies residues 345–369 (IGSRKRGPSSPPFEREGKLAKVINQ).

This sequence belongs to the herpesviridae DNA polymerase processivity factor family. In terms of assembly, interacts with the DNA polymerase catalytic subunit. Interacts with the origin-binding protein.

The protein resides in the host nucleus. In terms of biological role, plays an essential role in viral DNA replication by acting as the polymerase accessory subunit. Associates with the viral polymerase to increase its processivity and forms high-affinity direct interactions with DNA. Facilitates the origin-binding protein UL9 loading onto DNA thus increasing its ability to assemble into a functional complex capable of unwinding duplex DNA. This chain is DNA polymerase processivity factor (MDV055), found in Gallus gallus (Chicken).